The sequence spans 412 residues: Subtilisin-like protease 6 (412 aa).

An N-terminal signal peptide occupies residues 1-20; sequence MGFITKAIPIVLAALSTVNG. Residues 21 to 127 constitute a propeptide that is removed on maturation; that stretch reads AKILEAGPHA…VRTSTNGTNL (107 aa). The region spanning 36–120 is the Inhibitor I9 domain; that stretch reads KYIVVMKREV…YIEPDFVVRT (85 aa). 2 N-linked (GlcNAc...) asparagine glycosylation sites follow: Asn123 and Asn126. In terms of domain architecture, Peptidase S8 spans 135–412; it reads SWGLARVSSK…SKLIYNGSGK (278 aa). Catalysis depends on charge relay system residues Asp167 and His198. 2 N-linked (GlcNAc...) asparagine glycosylation sites follow: Asn252 and Asn264. The active-site Charge relay system is Ser358. N-linked (GlcNAc...) asparagine glycosylation occurs at Asn408.

Belongs to the peptidase S8 family.

It localises to the secreted. Its function is as follows. Secreted subtilisin-like serine protease with keratinolytic activity that contributes to pathogenicity. In Trichophyton tonsurans (Scalp ringworm fungus), this protein is Subtilisin-like protease 6 (SUB6).